A 737-amino-acid chain; its full sequence is Methylcrotonoyl-CoA carboxylase subunit alpha, mitochondrial (737 aa).

Residues 1 to 33 constitute a mitochondrion transit peptide; that stretch reads MASRLLLLPRRRSRHGGASLLLARLLSSSSSEA. The Biotin carboxylation domain maps to 38 to 485; sequence AVEKVLVANR…DTHFIERYQN (448 aa). ATP contacts are provided by residues Lys153, 185-246, Glu237, and His272; that span reads ANKI…PRHI. Residues 157–355 enclose the ATP-grasp domain; it reads KRIMGAAGVP…LVEWQIRIAN (199 aa). 3 residues coordinate Mn(2+): Glu312, Glu326, and Asn328. Arg330 is a catalytic residue. The interval 636–665 is disordered; that stretch reads YRQTLRAEQSPDDSSQPSASSEARSHPKGS. Over residues 647–657 the composition is skewed to low complexity; it reads DDSSQPSASSE. A Biotinyl-binding domain is found at 656 to 732; it reads SEARSHPKGS…FDSSVLFTVK (77 aa). Lys698 bears the N6-biotinyllysine mark.

As to quaternary structure, probably a heterodimer composed of biotin-containing alpha subunits and beta subunits. Biotin is required as a cofactor. Requires Mn(2+) as cofactor.

It localises to the mitochondrion matrix. The enzyme catalyses 3-methylbut-2-enoyl-CoA + hydrogencarbonate + ATP = 3-methyl-(2E)-glutaconyl-CoA + ADP + phosphate + H(+). Its pathway is amino-acid degradation; L-leucine degradation; (S)-3-hydroxy-3-methylglutaryl-CoA from 3-isovaleryl-CoA: step 2/3. In terms of biological role, biotin-attachment subunit of the 3-methylcrotonyl-CoA carboxylase, an enzyme that catalyzes the conversion of 3-methylcrotonyl-CoA to 3-methylglutaconyl-CoA, a critical step for leucine and isovaleric acid catabolism. This Oryza sativa subsp. japonica (Rice) protein is Methylcrotonoyl-CoA carboxylase subunit alpha, mitochondrial (MCCA).